The primary structure comprises 151 residues: Group 10 secretory phospholipase A2 (151 aa).

Positions 1-17 (MLLLLLLLLLGPGPGFS) are cleaved as a signal peptide. Residues 18–28 (EATRRSHVYKR) constitute a propeptide that is removed on maturation. Cystine bridges form between C39-C97, C53-C143, C55-C71, C70-C125, C76-C150, C77-C118, C86-C111, and C104-C116. Ca(2+) is bound by residues Y54, G56, and G58. H74 is a catalytic residue. D75 serves as a coordination point for Ca(2+). D119 is a catalytic residue.

This sequence belongs to the phospholipase A2 family. As to quaternary structure, interacts with PLA2R1; this interaction mediates PLA2G10 clearance and inactivation. It depends on Ca(2+) as a cofactor. Expressed at high levels in testis and the gastrointestinal tract including stomach and colon. Expressed at lower levels in other tissues including small intestine, uterus, oviduct, lung, thymus, spleen and brain. Expressed in Paneth-like secretory epithelial cells of the colon. Expressed in gastric and ileac epithelial cells and in glandular epithelium of intestinal mucosa (at protein level). Expressed in late spermatogenic cells, spermatocytes and spermatids, but not spermatogonia in seminiferous tubules (at protein level). Expressed mainly in the apical side of endometrial epithelial cells and in the interstitium beneath the epithelium of uterus (at protein level). Expressed in resident spleen macrophages (at protein level). Expressed at outermost layer of hair follicles. Expressed in dorsal root ganglia in both NEFH-positive A-fibers and PRPH-positive C-fibers (at protein level).

It is found in the secreted. The protein localises to the lysosome. Its subcellular location is the cytoplasmic vesicle. The protein resides in the secretory vesicle. It localises to the acrosome. The enzyme catalyses a 1,2-diacyl-sn-glycero-3-phosphocholine + H2O = a 1-acyl-sn-glycero-3-phosphocholine + a fatty acid + H(+). The catalysed reaction is 1-hexadecanoyl-2-(9Z-octadecenoyl)-sn-glycero-3-phosphocholine + H2O = 1-hexadecanoyl-sn-glycero-3-phosphocholine + (9Z)-octadecenoate + H(+). It carries out the reaction 1-octadecanoyl-2-(5Z,8Z,11Z,14Z-eicosatetraenoyl)-sn-glycero-3-phosphocholine + H2O = 1-octadecanoyl-sn-glycero-3-phosphocholine + (5Z,8Z,11Z,14Z)-eicosatetraenoate + H(+). It catalyses the reaction 1,2-dihexadecanoyl-sn-glycero-3-phosphocholine + H2O = 1-hexadecanoyl-sn-glycero-3-phosphocholine + hexadecanoate + H(+). The enzyme catalyses 1-hexadecanoyl-2-(9Z-octadecenoyl)-sn-glycero-3-phosphoglycerol + H2O = 1-hexadecanoyl-sn-glycero-3-phosphoglycerol + (9Z)-octadecenoate + H(+). The catalysed reaction is 1,2-dihexadecanoyl-sn-glycero-3-phospho-(1'-sn-glycerol) + H2O = 1-hexadecanoyl-sn-glycero-3-phospho-(1'-sn-glycerol) + hexadecanoate + H(+). It carries out the reaction 1-hexadecanoyl-2-(9Z-octadecenoyl)-sn-glycero-3-phospho-L-serine + H2O = 1-hexadecanoyl-sn-glycero-3-phospho-L-serine + (9Z)-octadecenoate + H(+). It catalyses the reaction 1-hexadecanoyl-2-(9Z,12Z-octadecadienoyl)-sn-glycero-3-phosphoethanolamine + H2O = 1-hexadecanoyl-sn-glycero-3-phosphoethanolamine + (9Z,12Z)-octadecadienoate + H(+). The enzyme catalyses 1-hexadecanoyl-2-(9Z-octadecenoyl)-sn-glycero-3-phosphate + H2O = 1-hexadecanoyl-sn-glycero-3-phosphate + (9Z)-octadecenoate + H(+). The catalysed reaction is 1-O-hexadecyl-2-acetyl-sn-glycero-3-phosphocholine + H2O = 1-O-hexadecyl-sn-glycero-3-phosphocholine + acetate + H(+). In terms of biological role, secretory calcium-dependent phospholipase A2 that primarily targets extracellular phospholipids. Hydrolyzes the ester bond of the fatty acyl group attached at sn-2 position of phospholipids with preference for phosphatidylcholines and phosphatidylglycerols over phosphatidylethanolamines. Preferentially releases sn-2 omega-6 and omega-3 polyunsaturated fatty acyl (PUFA) chains over saturated fatty acyls. Contributes to phospholipid remodeling of very low-density lipoprotein (VLDL), low-density lipoprotein (LDL) and high-density lipoprotein (HDL) particles. Hydrolyzes LDL phospholipids releasing unsaturated fatty acids that regulate macrophage differentiation toward foam cells. Efficiently hydrolyzes and inactivates PAF, a potent lipid mediator present in oxidized LDL. May act in an autocrine and paracrine manner. Secreted by lung epithelium, targets membrane phospholipids of infiltrating eosinophils, releasing arachidonate and boosting eicosanoid and cysteinyl leukotriene synthesis involved in airway inflammatory response. Secreted by gut epithelium, hydrolyzes dietary and biliary phosphatidylcholines in the gastrointestinal lumen, thereby regulating adipogenesis and body weight. Plays a stem cell regulator role in colon epithelium. Within intracellular compartment, mediates Paneth-like cell differentiation and its stem cell supporting functions by inhibiting Wnt signaling pathway in intestinal stem cell (ISC). Secreted in the intestinal lumen upon inflammation, acts in an autocrine way and promotes prostaglandin E2 synthesis that stimulates the Wnt signaling pathway in ISCs and tissue regeneration. May participate in hair follicle morphogenesis by regulating phosphatidylethanolamines metabolism at the outermost epithelial layer and facilitating melanin synthesis. By generating lysophosphatidylcholines (LPCs) at sperm acrosome controls sperm cell capacitation, acrosome reaction and overall fertility. May promote neurite outgrowth in neuron fibers involved in nociception. Contributes to lipid remodeling of cellular membranes and generation of lipid mediators involved in pathogen clearance. Cleaves sn-2 fatty acyl chains of phosphatidylglycerols and phosphatidylethanolamines, which are major components of membrane phospholipids in bacteria. Displays bactericidal activity against Gram-positive bacteria by directly hydrolyzing phospholipids of the bacterial membrane. In pulmonary epithelium, may contribute to host defense response against adenoviral infection. Prevents adenovirus entry into host cells by hydrolyzing host cell plasma membrane, releasing C16:0 LPCs that inhibit virus-mediated membrane fusion and viral infection. Likely prevents adenoviral entry into the endosomes of host cells. May play a role in maturation and activation of innate immune cells including macrophages, group 2 innate lymphoid cells and mast cells. This is Group 10 secretory phospholipase A2 (Pla2g10) from Mus musculus (Mouse).